Reading from the N-terminus, the 44-residue chain is Mu-conotoxin-like Cal 12.1.2f (44 aa).

4 disulfide bridges follow: C3/C15, C10/C27, C17/C32, and C26/C38. W16 is subject to 6'-bromotryptophan. Position 22 is a 4-hydroxyproline (P22). 2 positions are modified to 6'-bromotryptophan: W36 and W37. P39 is modified (4-hydroxyproline). W43 carries the post-translational modification 6'-bromotryptophan.

As to expression, expressed by the venom duct.

It localises to the secreted. Functionally, mu-conotoxins block voltage-gated sodium channels. This toxin reversibly blocks voltage-gated sodium channel in cephalopods, with no alteration in the voltage dependence of sodium conductance or on the kinetics of inactivation. The sequence is that of Mu-conotoxin-like Cal 12.1.2f from Californiconus californicus (California cone).